A 553-amino-acid chain; its full sequence is Dihydroxy-acid dehydratase (553 aa).

Asp-78 lines the Mg(2+) pocket. [2Fe-2S] cluster is bound at residue Cys-119. Mg(2+) contacts are provided by Asp-120 and Lys-121. The residue at position 121 (Lys-121) is an N6-carboxylysine. Cys-193 contacts [2Fe-2S] cluster. Residue Glu-441 participates in Mg(2+) binding. The Proton acceptor role is filled by Ser-467.

This sequence belongs to the IlvD/Edd family. Homodimer. [2Fe-2S] cluster is required as a cofactor. Requires Mg(2+) as cofactor.

The catalysed reaction is (2R)-2,3-dihydroxy-3-methylbutanoate = 3-methyl-2-oxobutanoate + H2O. It catalyses the reaction (2R,3R)-2,3-dihydroxy-3-methylpentanoate = (S)-3-methyl-2-oxopentanoate + H2O. It participates in amino-acid biosynthesis; L-isoleucine biosynthesis; L-isoleucine from 2-oxobutanoate: step 3/4. The protein operates within amino-acid biosynthesis; L-valine biosynthesis; L-valine from pyruvate: step 3/4. Functionally, functions in the biosynthesis of branched-chain amino acids. Catalyzes the dehydration of (2R,3R)-2,3-dihydroxy-3-methylpentanoate (2,3-dihydroxy-3-methylvalerate) into 2-oxo-3-methylpentanoate (2-oxo-3-methylvalerate) and of (2R)-2,3-dihydroxy-3-methylbutanoate (2,3-dihydroxyisovalerate) into 2-oxo-3-methylbutanoate (2-oxoisovalerate), the penultimate precursor to L-isoleucine and L-valine, respectively. The sequence is that of Dihydroxy-acid dehydratase from Trichlorobacter lovleyi (strain ATCC BAA-1151 / DSM 17278 / SZ) (Geobacter lovleyi).